We begin with the raw amino-acid sequence, 256 residues long: Membrane-anchored junction protein (256 aa).

Residues 1–232 (MSLKPFTYPF…HSSPPPPKEP (232 aa)) are Nuclear-facing. 2 disordered regions span residues 143–197 (KRKL…TPAS) and 211–235 (HGLQ…PGAR). Positions 164–173 (ETSSEASSNK) are enriched in polar residues. Residues 175-184 (PLKESKRSTD) are compositionally biased toward basic and acidic residues. A helical membrane pass occupies residues 233-251 (GARGFLGFLSALFPFRYFF). Over 252 to 256 (KKSGQ) the chain is Perinuclear space.

It belongs to the MAJIN family. Component of the MAJIN-TERB1-TERB2 complex, composed of MAJIN, TERB1 and TERB2. In terms of tissue distribution, specifically expressed in germline tissues.

The protein resides in the nucleus inner membrane. It localises to the chromosome. It is found in the telomere. Meiosis-specific telomere-associated protein involved in meiotic telomere attachment to the nucleus inner membrane, a crucial step for homologous pairing and synapsis. Component of the MAJIN-TERB1-TERB2 complex, which promotes telomere cap exchange by mediating attachment of telomeric DNA to the inner nuclear membrane and replacement of the protective cap of telomeric chromosomes: in early meiosis, the MAJIN-TERB1-TERB2 complex associates with telomeric DNA and the shelterin/telosome complex. During prophase, the complex matures and promotes release of the shelterin/telosome complex from telomeric DNA. In the complex, MAJIN acts as the anchoring subunit to the nucleus inner membrane. MAJIN shows DNA-binding activity, possibly for the stabilization of telomere attachment on the nucleus inner membrane. The polypeptide is Membrane-anchored junction protein (Mus musculus (Mouse)).